A 335-amino-acid polypeptide reads, in one-letter code: GTPase Obg (335 aa).

One can recognise an Obg domain in the interval 1 to 159; the sequence is MKFVDSASIR…REIGLELSIM (159 aa). An OBG-type G domain is found at 160 to 332; that stretch reads ADIGLLGMPN…LVAGLFKLVK (173 aa). Residues 166-173, 191-195, 212-215, 282-285, and 313-315 each bind GTP; these read GMPNAGKS, FTTLH, DIPG, NKMD, and SAL. Serine 173 and threonine 193 together coordinate Mg(2+).

It belongs to the TRAFAC class OBG-HflX-like GTPase superfamily. OBG GTPase family. As to quaternary structure, monomer. The cofactor is Mg(2+).

The protein resides in the cytoplasm. An essential GTPase which binds GTP, GDP and possibly (p)ppGpp with moderate affinity, with high nucleotide exchange rates and a fairly low GTP hydrolysis rate. Plays a role in control of the cell cycle, stress response, ribosome biogenesis and in those bacteria that undergo differentiation, in morphogenesis control. In Ruthia magnifica subsp. Calyptogena magnifica, this protein is GTPase Obg.